The following is a 423-amino-acid chain: Enolase (423 aa).

Residue Gln-164 participates in (2R)-2-phosphoglycerate binding. Glu-206 serves as the catalytic Proton donor. Mg(2+) is bound by residues Asp-243, Glu-289, and Asp-316. (2R)-2-phosphoglycerate-binding residues include Lys-341, Arg-370, Ser-371, and Lys-392. The Proton acceptor role is filled by Lys-341.

It belongs to the enolase family. It depends on Mg(2+) as a cofactor.

The protein resides in the cytoplasm. The protein localises to the secreted. It localises to the cell surface. The enzyme catalyses (2R)-2-phosphoglycerate = phosphoenolpyruvate + H2O. Its pathway is carbohydrate degradation; glycolysis; pyruvate from D-glyceraldehyde 3-phosphate: step 4/5. In terms of biological role, catalyzes the reversible conversion of 2-phosphoglycerate (2-PG) into phosphoenolpyruvate (PEP). It is essential for the degradation of carbohydrates via glycolysis. The sequence is that of Enolase from Desulfotalea psychrophila (strain LSv54 / DSM 12343).